Reading from the N-terminus, the 194-residue chain is A-type ATP synthase subunit E (194 aa).

The protein belongs to the V-ATPase E subunit family. In terms of assembly, has multiple subunits with at least A(3), B(3), C, D, E, F, H, I and proteolipid K(x).

It localises to the cell membrane. In terms of biological role, component of the A-type ATP synthase that produces ATP from ADP in the presence of a proton gradient across the membrane. The sequence is that of A-type ATP synthase subunit E from Haloferax volcanii (strain ATCC 29605 / DSM 3757 / JCM 8879 / NBRC 14742 / NCIMB 2012 / VKM B-1768 / DS2) (Halobacterium volcanii).